The sequence spans 180 residues: Large ribosomal subunit protein uL22 (180 aa).

Disordered regions lie at residues 1-20 and 160-180; these read MTKP…CKSR and PKPA…EISA. The segment covering 8-20 has biased composition (polar residues); sequence KTPSNPEKSCKSR.

It belongs to the universal ribosomal protein uL22 family.

The chain is Large ribosomal subunit protein uL22 (rpl17) from Dictyostelium discoideum (Social amoeba).